We begin with the raw amino-acid sequence, 221 residues long: Orotate phosphoribosyltransferase (221 aa).

K26 provides a ligand contact to 5-phospho-alpha-D-ribose 1-diphosphate. 34–35 is an orotate binding site; it reads FF. Residues 72–73, R98, K99, K102, H104, and 123–131 contribute to the 5-phospho-alpha-D-ribose 1-diphosphate site; these read YK and DDVISAGTS. 2 residues coordinate orotate: S127 and R155.

This sequence belongs to the purine/pyrimidine phosphoribosyltransferase family. PyrE subfamily. In terms of assembly, homodimer. It depends on Mg(2+) as a cofactor.

It catalyses the reaction orotidine 5'-phosphate + diphosphate = orotate + 5-phospho-alpha-D-ribose 1-diphosphate. The protein operates within pyrimidine metabolism; UMP biosynthesis via de novo pathway; UMP from orotate: step 1/2. Catalyzes the transfer of a ribosyl phosphate group from 5-phosphoribose 1-diphosphate to orotate, leading to the formation of orotidine monophosphate (OMP). The polypeptide is Orotate phosphoribosyltransferase (Herminiimonas arsenicoxydans).